Consider the following 332-residue polypeptide: Glycerol-3-phosphate dehydrogenase [NAD(P)+] (332 aa).

NADPH-binding residues include Ser10, Trp11, Lys31, and Lys105. 3 residues coordinate sn-glycerol 3-phosphate: Lys105, Gly136, and Ser138. Ala140 is a binding site for NADPH. Residues Lys191, Asp244, Ser254, Arg255, and Asn256 each contribute to the sn-glycerol 3-phosphate site. Catalysis depends on Lys191, which acts as the Proton acceptor. Arg255 lines the NADPH pocket. 2 residues coordinate NADPH: Val279 and Glu281.

Belongs to the NAD-dependent glycerol-3-phosphate dehydrogenase family.

It localises to the cytoplasm. It catalyses the reaction sn-glycerol 3-phosphate + NAD(+) = dihydroxyacetone phosphate + NADH + H(+). The catalysed reaction is sn-glycerol 3-phosphate + NADP(+) = dihydroxyacetone phosphate + NADPH + H(+). It participates in membrane lipid metabolism; glycerophospholipid metabolism. Catalyzes the reduction of the glycolytic intermediate dihydroxyacetone phosphate (DHAP) to sn-glycerol 3-phosphate (G3P), the key precursor for phospholipid synthesis. The chain is Glycerol-3-phosphate dehydrogenase [NAD(P)+] from Anaeromyxobacter dehalogenans (strain 2CP-C).